Consider the following 849-residue polypeptide: A-kinase anchor protein 4 (849 aa).

A propeptide spanning residues 1-188 is cleaved from the precursor; it reads MIAYCGTTTM…MAASKNTNNN (188 aa). Phosphoserine occurs at positions 96, 130, 190, and 204. A compositionally biased stretch (polar residues) spans 183 to 205; that stretch reads KNTNNNQSPSNPATKSPSNQRSV. Residues 183-210 are disordered; the sequence is KNTNNNQSPSNPATKSPSNQRSVATPEG. Thr-207 carries the phosphothreonine modification. Residues Ser-213, Ser-226, and Ser-271 each carry the phosphoserine modification. Residues 219-232 form a PKA-RI and PKA-RII subunit binding domain region; that stretch reads FYVNRLSSLVIQMA. Residue Tyr-301 is modified to Phosphotyrosine. Phosphoserine is present on residues Ser-302, Ser-341, Ser-431, Ser-442, Ser-444, Ser-463, Ser-492, Ser-497, and Ser-504. A PKA-RI-alpha subunit binding domain region spans residues 335–344; that stretch reads YANQVASDMM. Thr-506 carries the phosphothreonine modification. A Phosphoserine modification is found at Ser-538. Ser-583 bears the Phosphoserine; by STK33 mark. 4 positions are modified to phosphoserine: Ser-628, Ser-633, Ser-652, and Ser-702.

Belongs to the AKAP110 family. Interacts with PRKAR1A and PRKAR2A. Interacts with ENO4. Interacts with QRICH2. Post-translationally, phosphorylated by STK33 during sperm flagella assembly. In terms of tissue distribution, expressed in the fibrous sheath of spermatozoa (at protein level). Expressed in step 1 to step 6 spermatids, abundance then increases during steps 8 to 12, abundance decreases thereafter.

It localises to the cell projection. It is found in the cilium. The protein localises to the flagellum. Major structural component of sperm fibrous sheath. Plays a role in sperm motility. The protein is A-kinase anchor protein 4 of Mus musculus (Mouse).